A 399-amino-acid chain; its full sequence is S-adenosylmethionine synthase (399 aa).

His-17 lines the ATP pocket. Mg(2+) is bound at residue Asp-19. Position 52 (Glu-52) interacts with K(+). 2 residues coordinate L-methionine: Glu-65 and Gln-109. Residues 109-119 (QSADIAQGVDA) form a flexible loop region. ATP is bound by residues 177 to 179 (DSK), 243 to 244 (KF), Asp-252, 258 to 259 (RK), Ala-275, and Lys-279. L-methionine is bound at residue Asp-252. Residue Lys-283 participates in L-methionine binding.

It belongs to the AdoMet synthase family. As to quaternary structure, homotetramer; dimer of dimers. Mg(2+) is required as a cofactor. It depends on K(+) as a cofactor.

It localises to the cytoplasm. The enzyme catalyses L-methionine + ATP + H2O = S-adenosyl-L-methionine + phosphate + diphosphate. The protein operates within amino-acid biosynthesis; S-adenosyl-L-methionine biosynthesis; S-adenosyl-L-methionine from L-methionine: step 1/1. Its function is as follows. Catalyzes the formation of S-adenosylmethionine (AdoMet) from methionine and ATP. The overall synthetic reaction is composed of two sequential steps, AdoMet formation and the subsequent tripolyphosphate hydrolysis which occurs prior to release of AdoMet from the enzyme. The sequence is that of S-adenosylmethionine synthase from Bradyrhizobium sp. (strain ORS 278).